Here is a 119-residue protein sequence, read N- to C-terminus: NADH-quinone oxidoreductase subunit A (119 aa).

A run of 3 helical transmembrane segments spans residues 7-27 (YPVL…VSIG), 63-83 (LVAI…PWGV), and 88-108 (IGWP…LGFA).

The protein belongs to the complex I subunit 3 family. NDH-1 is composed of 14 different subunits. Subunits NuoA, H, J, K, L, M, N constitute the membrane sector of the complex.

It is found in the cell inner membrane. It carries out the reaction a quinone + NADH + 5 H(+)(in) = a quinol + NAD(+) + 4 H(+)(out). NDH-1 shuttles electrons from NADH, via FMN and iron-sulfur (Fe-S) centers, to quinones in the respiratory chain. The immediate electron acceptor for the enzyme in this species is believed to be ubiquinone. Couples the redox reaction to proton translocation (for every two electrons transferred, four hydrogen ions are translocated across the cytoplasmic membrane), and thus conserves the redox energy in a proton gradient. In Burkholderia vietnamiensis (strain G4 / LMG 22486) (Burkholderia cepacia (strain R1808)), this protein is NADH-quinone oxidoreductase subunit A.